The following is a 321-amino-acid chain: Glucokinase (321 aa).

ATP is bound at residue 10–15; the sequence is GDIGGT.

The protein belongs to the bacterial glucokinase family.

The protein localises to the cytoplasm. The catalysed reaction is D-glucose + ATP = D-glucose 6-phosphate + ADP + H(+). The chain is Glucokinase from Marinobacter nauticus (strain ATCC 700491 / DSM 11845 / VT8) (Marinobacter aquaeolei).